The following is a 337-amino-acid chain: Phenylalanine--tRNA ligase alpha subunit (337 aa).

Mg(2+) is bound at residue glutamate 252.

The protein belongs to the class-II aminoacyl-tRNA synthetase family. Phe-tRNA synthetase alpha subunit type 1 subfamily. As to quaternary structure, tetramer of two alpha and two beta subunits. Mg(2+) is required as a cofactor.

The protein resides in the cytoplasm. It carries out the reaction tRNA(Phe) + L-phenylalanine + ATP = L-phenylalanyl-tRNA(Phe) + AMP + diphosphate + H(+). This Francisella tularensis subsp. holarctica (strain OSU18) protein is Phenylalanine--tRNA ligase alpha subunit.